Reading from the N-terminus, the 328-residue chain is Arabinose 5-phosphate isomerase KdsD (328 aa).

The 143-residue stretch at 42-184 (CEKMFWCKGK…AVALLKARGF (143 aa)) folds into the SIS domain. Substrate-binding positions include 75–76 (GT), histidine 82, histidine 88, 114–123 (ALIPVLKRLH), 148–150 (KVA), threonine 222, and aspartate 275. A Zn(2+)-binding site is contributed by histidine 82. Positions 210 to 268 (MHTGDEIPHVKKTASLRDALLEVTRKNLGMTVICDDNMMIEGIFTDGDLRRVFDMGVDV) constitute a CBS 1 domain. The region spanning 277–328 (MTPGGIRVRPGILAVEALNLMQSRHITSVMVADGDHLLGVLHMHDLLRAGVV) is the CBS 2 domain.

The protein belongs to the SIS family. GutQ/KpsF subfamily. Homotetramer.

The enzyme catalyses D-arabinose 5-phosphate = D-ribulose 5-phosphate. The protein operates within carbohydrate biosynthesis; 3-deoxy-D-manno-octulosonate biosynthesis; 3-deoxy-D-manno-octulosonate from D-ribulose 5-phosphate: step 1/3. It participates in bacterial outer membrane biogenesis; lipopolysaccharide biosynthesis. Its function is as follows. Involved in the biosynthesis of 3-deoxy-D-manno-octulosonate (KDO), a unique 8-carbon sugar component of lipopolysaccharides (LPSs). Catalyzes the reversible aldol-ketol isomerization between D-ribulose 5-phosphate (Ru5P) and D-arabinose 5-phosphate (A5P). The protein is Arabinose 5-phosphate isomerase KdsD (kdsD) of Escherichia coli O157:H7.